Here is a 173-residue protein sequence, read N- to C-terminus: Peptidyl-prolyl cis-trans isomerase cyp3 (173 aa).

One can recognise a PPIase cyclophilin-type domain in the interval 8 to 172; sequence FMDIAIDGRL…SNVAIVECGE (165 aa).

This sequence belongs to the cyclophilin-type PPIase family. PPIase H subfamily.

Its subcellular location is the cytoplasm. The protein localises to the cytoskeleton. The protein resides in the microtubule organizing center. It localises to the spindle pole body. The enzyme catalyses [protein]-peptidylproline (omega=180) = [protein]-peptidylproline (omega=0). Functionally, PPIases accelerate the folding of proteins. It catalyzes the cis-trans isomerization of proline imidic peptide bonds in oligopeptides. The polypeptide is Peptidyl-prolyl cis-trans isomerase cyp3 (cyp3) (Schizosaccharomyces pombe (strain 972 / ATCC 24843) (Fission yeast)).